The primary structure comprises 564 residues: Dihydroxy-acid dehydratase (564 aa).

C53 is a [2Fe-2S] cluster binding site. A Mg(2+)-binding site is contributed by D85. Position 126 (C126) interacts with [2Fe-2S] cluster. Positions 127 and 128 each coordinate Mg(2+). K128 is subject to N6-carboxylysine. Residue C203 coordinates [2Fe-2S] cluster. A Mg(2+)-binding site is contributed by E454. Residue S480 is the Proton acceptor of the active site.

The protein belongs to the IlvD/Edd family. In terms of assembly, homodimer. It depends on [2Fe-2S] cluster as a cofactor. Mg(2+) serves as cofactor.

The catalysed reaction is (2R)-2,3-dihydroxy-3-methylbutanoate = 3-methyl-2-oxobutanoate + H2O. The enzyme catalyses (2R,3R)-2,3-dihydroxy-3-methylpentanoate = (S)-3-methyl-2-oxopentanoate + H2O. Its pathway is amino-acid biosynthesis; L-isoleucine biosynthesis; L-isoleucine from 2-oxobutanoate: step 3/4. It participates in amino-acid biosynthesis; L-valine biosynthesis; L-valine from pyruvate: step 3/4. Functions in the biosynthesis of branched-chain amino acids. Catalyzes the dehydration of (2R,3R)-2,3-dihydroxy-3-methylpentanoate (2,3-dihydroxy-3-methylvalerate) into 2-oxo-3-methylpentanoate (2-oxo-3-methylvalerate) and of (2R)-2,3-dihydroxy-3-methylbutanoate (2,3-dihydroxyisovalerate) into 2-oxo-3-methylbutanoate (2-oxoisovalerate), the penultimate precursor to L-isoleucine and L-valine, respectively. The sequence is that of Dihydroxy-acid dehydratase from Leifsonia xyli subsp. xyli (strain CTCB07).